The following is a 107-amino-acid chain: Nucleoid-associated protein Mlg_1509 (107 aa).

This sequence belongs to the YbaB/EbfC family. In terms of assembly, homodimer.

Its subcellular location is the cytoplasm. The protein resides in the nucleoid. Binds to DNA and alters its conformation. May be involved in regulation of gene expression, nucleoid organization and DNA protection. In Alkalilimnicola ehrlichii (strain ATCC BAA-1101 / DSM 17681 / MLHE-1), this protein is Nucleoid-associated protein Mlg_1509.